Here is a 186-residue protein sequence, read N- to C-terminus: Mating-type-like protein ALPHA2 (186 aa).

The homeobox; TALE-type DNA-binding region spans 112–174 (KKIKSRRLTK…NRRRKEKNTK (63 aa)).

This sequence belongs to the TALE/M-ATYP homeobox family. As to quaternary structure, forms a heterodimer with A1.

Its subcellular location is the nucleus. Functionally, mating type proteins are sequence specific DNA-binding proteins that act as master switches in yeast differentiation by controlling gene expression in a cell type-specific fashion. Transcriptional corepressor that acts in conjunction with A1 to repress transcription both of homozygote-specific genes and of genes necessary for the white-opaque switch, a prerequisite for mating. This is Mating-type-like protein ALPHA2 (MTLALPHA2) from Candida albicans (strain SC5314 / ATCC MYA-2876) (Yeast).